The chain runs to 524 residues: 2-isopropylmalate synthase (524 aa).

One can recognise a Pyruvate carboxyltransferase domain in the interval 5-267 (VIIFDTTLRD…HTNIRHSEIH (263 aa)). Positions 14, 202, 204, and 238 each coordinate Mn(2+). Residues 392 to 524 (KLEYLGVQSG…KTDKINTESV (133 aa)) are regulatory domain.

It belongs to the alpha-IPM synthase/homocitrate synthase family. LeuA type 1 subfamily. Homodimer. The cofactor is Mn(2+).

It is found in the cytoplasm. It catalyses the reaction 3-methyl-2-oxobutanoate + acetyl-CoA + H2O = (2S)-2-isopropylmalate + CoA + H(+). It functions in the pathway amino-acid biosynthesis; L-leucine biosynthesis; L-leucine from 3-methyl-2-oxobutanoate: step 1/4. Functionally, catalyzes the condensation of the acetyl group of acetyl-CoA with 3-methyl-2-oxobutanoate (2-ketoisovalerate) to form 3-carboxy-3-hydroxy-4-methylpentanoate (2-isopropylmalate). The chain is 2-isopropylmalate synthase from Aeromonas salmonicida (strain A449).